A 485-amino-acid chain; its full sequence is Glutamate--tRNA ligase 2 (485 aa).

A 'HIGH' region motif is present at residues 10–20 (PSPTGPIHIGN). A 'KMSKS' region motif is present at residues 252–256 (KLSKR). Lys-255 lines the ATP pocket.

This sequence belongs to the class-I aminoacyl-tRNA synthetase family. Glutamate--tRNA ligase type 1 subfamily. In terms of assembly, monomer.

The protein localises to the cytoplasm. It catalyses the reaction tRNA(Glu) + L-glutamate + ATP = L-glutamyl-tRNA(Glu) + AMP + diphosphate. Functionally, catalyzes the attachment of glutamate to tRNA(Glu) in a two-step reaction: glutamate is first activated by ATP to form Glu-AMP and then transferred to the acceptor end of tRNA(Glu). The protein is Glutamate--tRNA ligase 2 of Caldanaerobacter subterraneus subsp. tengcongensis (strain DSM 15242 / JCM 11007 / NBRC 100824 / MB4) (Thermoanaerobacter tengcongensis).